Here is an 860-residue protein sequence, read N- to C-terminus: Leucine--tRNA ligase (860 aa).

The 'HIGH' region signature appears at 42–52; sequence PYPSGRLHMGH. The 'KMSKS' region motif lies at 619 to 623; the sequence is KMSKS. K622 is an ATP binding site.

Belongs to the class-I aminoacyl-tRNA synthetase family.

It localises to the cytoplasm. The catalysed reaction is tRNA(Leu) + L-leucine + ATP = L-leucyl-tRNA(Leu) + AMP + diphosphate. This chain is Leucine--tRNA ligase, found in Klebsiella pneumoniae subsp. pneumoniae (strain ATCC 700721 / MGH 78578).